The chain runs to 1044 residues: Elongation factor 3A (1044 aa).

S2 carries the post-translational modification N-acetylserine. The HEAT 1 repeat unit spans residues Q5–I42. The ADP site is built by I42, H44, and S83. 6 HEAT repeats span residues P86–P123, A125–D162, L166–N203, D205–P241, A242–D279, and P285–V323. N6,N6,N6-trimethyllysine occurs at positions 187 and 196. Residue K350 forms a Glycyl lysine isopeptide (Lys-Gly) (interchain with G-Cter in ubiquitin) linkage. ADP is bound by residues T392, H396, and E397. In terms of domain architecture, ABC transporter 1 spans D426–L641. A Glycyl lysine isopeptide (Lys-Gly) (interchain with G-Cter in ubiquitin) cross-link involves residue K636. S642 is subject to Phosphoserine. The region spanning V667–D993 is the ABC transporter 2 domain. Residue N703 coordinates ADP. Residue K789 is modified to N6,N6,N6-trimethyllysine. Residues E922, N925, and H951 each contribute to the ADP site. T972 is subject to Phosphothreonine. Position 974 is a phosphoserine (S974). The tract at residues S974–F1044 is disordered. Residues G1007–K1031 are compositionally biased toward basic residues. Phosphoserine occurs at positions 1039 and 1040.

The protein belongs to the ABC transporter superfamily. ABCF family. EF3 subfamily. In terms of assembly, monomer. Interacts with elongation factor 1A (eEF1A). Interacts through its N-terminus with 18S rRNA. Associates with ribosomes; preferentially binds ribosomes in the post-translocational state (bearing a peptidyl-tRNA in the P-site) in the presence of ATP, suggesting that ATP hydrolysis is required for ribosome dissociation.

The protein localises to the cytoplasm. The protein resides in the cytosol. It carries out the reaction ATP + H2O = ADP + phosphate + H(+). The protein operates within protein biosynthesis; polypeptide chain elongation. With respect to regulation, inhibited by the translational inhibitors neomycin and alpha-sarcin, which suppress the ATPase activity. Functionally, ribosome-dependent ATPase that functions in cytoplasmic translation elongation. Required for the ATP-dependent release of deacylated tRNA from the ribosomal E-site during protein biosynthesis. Stimulates the eEF1A-dependent binding of aminoacyl-tRNA to the ribosomal A-site, which has reduced affinity for tRNA as long as the E-site is occupied. Assists translation termination by stimulating the release of nascent protein from the ribosome by release factors. In nutrient-replete conditions, occupies the space on the ribosome bound by GCN1 during amino acid starvation conditions, and therefore indirectly negatively regulates GCN2 kinase activity in replete conditions. This chain is Elongation factor 3A (YEF3), found in Saccharomyces cerevisiae (strain ATCC 204508 / S288c) (Baker's yeast).